The following is a 305-amino-acid chain: NAD kinase (305 aa).

Aspartate 76 serves as the catalytic Proton acceptor. NAD(+) contacts are provided by residues 76-77, 150-151, arginine 161, and aspartate 180; these read DG and ND.

The protein belongs to the NAD kinase family. A divalent metal cation serves as cofactor.

The protein localises to the cytoplasm. It carries out the reaction NAD(+) + ATP = ADP + NADP(+) + H(+). Involved in the regulation of the intracellular balance of NAD and NADP, and is a key enzyme in the biosynthesis of NADP. Catalyzes specifically the phosphorylation on 2'-hydroxyl of the adenosine moiety of NAD to yield NADP. This chain is NAD kinase, found in Treponema pallidum (strain Nichols).